Here is a 244-residue protein sequence, read N- to C-terminus: DnaJ homolog subfamily C member 4 (244 aa).

In terms of domain architecture, J spans 37–102 (NYYELLGVHP…ESRRNYDHQL (66 aa)). The segment at 96–127 (RNYDHQLHSASPPKSSGSTAEPKYTQQTHSSW) is disordered. Polar residues predominate over residues 103 to 127 (HSASPPKSSGSTAEPKYTQQTHSSW). The helical transmembrane segment at 159-178 (VLGYCLLLMVAGMGLHYVAF) threads the bilayer. Residues 208-244 (RANRARIQQERQQRQQPRAEPSLPPESSRIMPQDTSP) are disordered.

It is found in the membrane. The polypeptide is DnaJ homolog subfamily C member 4 (Dnajc4) (Mus musculus (Mouse)).